The sequence spans 311 residues: Olfactory receptor 10J4 (311 aa).

The Extracellular portion of the chain corresponds to 1-29; it reads MPRPNFMAVTEFTFEGFSIFEWHHRLILF. Residues 30–50 traverse the membrane as a helical segment; sequence VIFLVLYVLTLASNAIILIVI. The Cytoplasmic portion of the chain corresponds to 51–57; sequence RLNHQLH. Residues 58-78 traverse the membrane as a helical segment; sequence TPMYFFLSVLSISETYYTVAI. Topologically, residues 79-98 are extracellular; it reads NPQMLSGLLSPQQTISIPGC. A disulfide bond links cysteine 98 and cysteine 180. The helical transmembrane segment at 99-119 threads the bilayer; sequence AAQLFFYLTFGVNKCFLLTAM. The Cytoplasmic segment spans residues 120–149; it reads GYDHYVAICNPLQYSVIMGKKACIQLVSGS. The helical transmembrane segment at 150–170 threads the bilayer; sequence WNIGLSTAIIQVSSVFSLPFC. Topologically, residues 171–202 are extracellular; sequence DANLISHFFCDIRPIMKLACADTTIKEFITLL. The helical transmembrane segment at 203–223 threads the bilayer; it reads ISLCVLVLPMVLIFISYVLIV. Topologically, residues 224–237 are cytoplasmic; sequence TTILKIASAEGRRK. Residues 238–254 traverse the membrane as a helical segment; the sequence is AFATCASHLTVVIVHYG. Topologically, residues 255–272 are extracellular; that stretch reads RTSFIYLKPKSQNSLQDR. Residues 273–292 form a helical membrane-spanning segment; sequence LISVTYTVITPLLNPVVYSL. The Cytoplasmic segment spans residues 293–311; sequence RNKEVKDALLRALGRKPLS.

The protein belongs to the G-protein coupled receptor 1 family.

The protein resides in the cell membrane. Functionally, odorant receptor. This is Olfactory receptor 10J4 (OR10J4) from Homo sapiens (Human).